Consider the following 328-residue polypeptide: Renalase (328 aa).

Residues Ala-13, 32-33 (DK), Arg-40, and 56-57 (QY) each bind FAD. Residues 57–61 (YFTAR) and 96–98 (SPD) each bind substrate. Residue Ile-128 coordinates FAD. Thr-185 is a binding site for substrate. FAD is bound at residue Asp-302. Residue Arg-308 participates in substrate binding. Val-309 contributes to the FAD binding site.

This sequence belongs to the bacterial renalase family. It depends on FAD as a cofactor.

It carries out the reaction 1,2-dihydro-beta-NAD + O2 + H(+) = H2O2 + NAD(+). The enzyme catalyses 1,2-dihydro-beta-NADP + O2 + H(+) = H2O2 + NADP(+). It catalyses the reaction 1,6-dihydro-beta-NADP + O2 + H(+) = H2O2 + NADP(+). The catalysed reaction is 1,6-dihydro-beta-NAD + O2 + H(+) = H2O2 + NAD(+). Its function is as follows. Catalyzes the oxidation of the 1,2-dihydro- and 1,6-dihydro- isomeric forms of beta-NAD(P) back to beta-NAD(P)+. Has a preference for 1,2-dihydro-beta-NAD as substrate. May serve to protect primary metabolism dehydrogenases from inhibition by the 1,2-dihydro- and 1,6-dihydro-beta-NAD(P) isomers. In Pseudomonas syringae pv. tomato (strain ATCC BAA-871 / DC3000), this protein is Renalase.